Reading from the N-terminus, the 296-residue chain is Putative peptide transport system permease protein BRA1093/BS1330_II1085 (296 aa).

6 helical membrane passes run 35–55 (IGLVLLLIVVLAAVLAPWITN), 97–117 (LWIGLTVAVLSAILGAIIGIA), 131–151 (VMDALMAFPAILLAIGISAAL), 205–225 (ILPNCLAPLLVTLTFVFAYAI), 229–249 (ATLSFLGIGTPPPHASWGSIV), and 260–280 (WWIMLFPGIAITISALAINLI). The region spanning 97-281 (LWIGLTVAVL…ISALAINLIG (185 aa)) is the ABC transmembrane type-1 domain.

It belongs to the binding-protein-dependent transport system permease family. In terms of assembly, the complex is composed of two ATP-binding proteins (BRA1094), two transmembrane proteins (BRA1092 and BRA1093) and a solute-binding protein (BRA1090).

Its subcellular location is the cell inner membrane. Functionally, probably part of an ABC transporter complex that could be involved in peptide import. Probably responsible for the translocation of the substrate across the membrane. The polypeptide is Putative peptide transport system permease protein BRA1093/BS1330_II1085 (Brucella suis biovar 1 (strain 1330)).